Consider the following 2181-residue polypeptide: Non-reducing polyketide synthase subA (2181 aa).

The segment at Gln74–Asp180 is N-terminal acylcarrier protein transacylase domain (SAT). Residues Gln347–Gln779 enclose the Ketosynthase family 3 (KS3) domain. Residues Cys525, His661, and His702 each act as for beta-ketoacyl synthase activity in the active site. Residues Val891–Pro1193 form a malonyl-CoA:ACP transacylase (MAT) domain region. The active-site For acyl/malonyl transferase activity is the Ser977. An N-terminal hotdog fold region spans residues Val1269–Ser1401. One can recognise a PKS/mFAS DH domain in the interval Val1269–Lys1579. Positions Gln1276–Ile1573 are product template (PT) domain. The interval Ser1425–Lys1579 is C-terminal hotdog fold. The disordered stretch occupies residues Ile1652–Met1673. A compositionally biased stretch (low complexity) spans Ser1653–Ser1670. The 77-residue stretch at Glu1677–Gln1753 folds into the Carrier domain. Position 1713 is an O-(pantetheine 4'-phosphoryl)serine (Ser1713). A methyltransferase (CMeT) domain region spans residues Glu1982–Thr2164.

It functions in the pathway secondary metabolite biosynthesis; terpenoid biosynthesis. Functionally, non-reducing polyketide synthase; part of the gene cluster that mediates the biosynthesis of the immunosuppressants subglutinols, meroterpenoids consisting of an alpha-pyrone (4-hydroxy-5,6-dimethyl-2-pyrone) moiety attached to a decalin core fused to a five-membered cyclic ether carrying a prenylside chain. The first step of the pathway is the synthesis of the alpha-pyrone moiety by the polyketide synthase subA via condensation of one acetyl-CoA starter unit with 3 malonyl-CoA units and 2 methylations. The alpha-pyrone is then combined with geranylgeranyl pyrophosphate (GGPP) formed by the GGPP synthase subD through the action of the prenyltransferase subC to yield a linear alpha-pyrone diterpenoid. Subsequent steps in the subglutinol biosynthetic pathway involve the decalin core formation, which is thought to be initiated by the epoxidation of the C10-C11 olefin by the FAD-dependent oxidoreductase subE. The following cyclization cascade would be catalyzed by the terpene cyclase subB. Lastly, the FAD-dependent dehydrogenase subF probably catalyzes the five-membered cyclic ether formation to complete the formation of subglutinol A. Subsequent redox reactions appear to give rise to subglutinol C and D, however, it remains unclear which enzymes are responsible for these transformations. SubD may have secondary function in the conversion of the identified subglutinols to subglutinol analog 45, which seems to be the major product of the cluster. The sequence is that of Non-reducing polyketide synthase subA from Metarhizium robertsii (strain ARSEF 23 / ATCC MYA-3075) (Metarhizium anisopliae (strain ARSEF 23)).